The sequence spans 1293 residues: DNA repair protein complementing XP-C cells homolog (1293 aa).

Disordered regions lie at residues 1–199 (MSDE…FEDK), 217–239 (ERTR…QAAT), 255–341 (QSVE…NISG), 514–640 (DLIP…SKCL), and 658–919 (LSSK…EPAK). Positions 18-30 (DEWKPSKDVKGGE) are enriched in basic and acidic residues. Phosphoserine is present on residues Ser-31, Ser-32, and Ser-37. Over residues 31–43 (SSDDDDSDFDELQ) the composition is skewed to acidic residues. Over residues 51 to 60 (SSGRSSAVAG) the composition is skewed to low complexity. Polar residues-rich tracts occupy residues 101 to 130 (FPTS…SGAR) and 226 to 238 (RNVT…SQAA). Positions 288 to 301 (SKTKSTRIKRHTKT) are enriched in basic residues. Residues 313 to 335 (DTDDSDFEEVADADLSSDQDDGE) are compositionally biased toward acidic residues. Over residues 520–578 (LRPDDKNKSQTVESERESEDEKPKKDKKAGKPAEKESSKSTISKEAEKKNNAKKAEAKP) the composition is skewed to basic and acidic residues. Residues Ser-533 and Ser-537 each carry the phosphoserine modification. The segment covering 580–594 (SKSTTKGSETTKSGT) has biased composition (low complexity). Basic and acidic residues predominate over residues 598-612 (VKKELSLSSKLVEKS). The segment covering 658-692 (LSSKLVLKSKNQSSFSSNKSDTSFEENPSTSSSSK) has biased composition (low complexity). Residues 693–711 (SLKEETAKLSSSKLEDKKV) show a composition bias toward basic and acidic residues. Residues 720–737 (KVQSSLLKRVTTQNISES) show a composition bias toward polar residues. A compositionally biased stretch (basic and acidic residues) spans 806 to 818 (HLQEQRNTRETRS). Residues Ser-908 and Ser-911 each carry the phosphoserine modification. 3 consecutive short sequence motifs (nuclear localization signal) follow at residues 922 to 938 (KKAP…RKDR), 1195 to 1211 (KKTV…ICKK), and 1275 to 1291 (KKLI…KKKY).

Belongs to the XPC family. As to quaternary structure, heterodimer.

Its subcellular location is the nucleus. In terms of biological role, involved in DNA excision repair. May play a part in DNA damage recognition and/or in altering chromatin structure to allow access by damage-processing enzymes. Its function is as follows. Involved in nucleotide excision repair of DNA damaged with UV light, bulky adducts, or cross-linking agents. This is DNA repair protein complementing XP-C cells homolog from Drosophila melanogaster (Fruit fly).